We begin with the raw amino-acid sequence, 466 residues long: Hydroxyacid-oxoacid transhydrogenase, mitochondrial (466 aa).

Lys-444 bears the N6-acetyllysine mark. At Ser-451 the chain carries Phosphoserine.

Belongs to the iron-containing alcohol dehydrogenase family. Hydroxyacid-oxoacid transhydrogenase subfamily.

The protein resides in the mitochondrion. The enzyme catalyses (S)-3-hydroxybutanoate + 2-oxoglutarate = (R)-2-hydroxyglutarate + acetoacetate. It carries out the reaction 4-hydroxybutanoate + 2-oxoglutarate = (R)-2-hydroxyglutarate + succinate semialdehyde. Its function is as follows. Catalyzes the cofactor-independent reversible oxidation of gamma-hydroxybutyrate (GHB) to succinic semialdehyde (SSA) coupled to reduction of 2-ketoglutarate (2-KG) to D-2-hydroxyglutarate (D-2-HG). L-3-hydroxybutyrate (L-3-OHB) is also a substrate for HOT when using 2-KG as hydrogen acceptor, resulting in the formation of D-2-HG. The polypeptide is Hydroxyacid-oxoacid transhydrogenase, mitochondrial (ADHFE1) (Bos taurus (Bovine)).